The chain runs to 145 residues: MAPRSLYLLAVLLFSANLFAGVGFAAAAEGPEDKGLTKGGKGKGEKGTKVGADDTNGTDPDPEPEPEPEPEPEPEPEPEPEPEPEPEPEPEPEPEPEPEPEPEPEPEPEPEPEPEPEPEPEPGAATLKSVALPFAIAAAALVAAF.

Positions 1 to 27 are cleaved as a signal peptide; sequence MAPRSLYLLAVLLFSANLFAGVGFAAA. The segment at 28–127 is disordered; the sequence is AEGPEDKGLT…PEPEPGAATL (100 aa). Residues 31 to 52 show a composition bias toward basic and acidic residues; it reads PEDKGLTKGGKGKGEKGTKVGA. 32 consecutive repeat copies span residues 59-60, 61-62, 63-64, 65-66, 67-68, 69-70, 71-72, 73-74, 75-76, 77-78, 79-80, 81-82, 83-84, 85-86, 87-88, 89-90, 91-92, 93-94, 95-96, 97-98, 99-100, 101-102, 103-104, 105-106, 107-108, 109-110, 111-112, 113-114, 115-116, 117-118, 119-120, and 121-122. The 32 X 2 AA tandem repeats of [DE]-P stretch occupies residues 59–122; it reads DPDPEPEPEP…EPEPEPEPEP (64 aa). A compositionally biased stretch (acidic residues) spans 60–120; sequence PDPEPEPEPE…EPEPEPEPEP (61 aa). Gly123 carries the GPI-anchor amidated glycine lipid modification. Residues 124 to 145 constitute a propeptide that is removed on maturation; the sequence is AATLKSVALPFAIAAAALVAAF.

The protein resides in the cell membrane. Its function is as follows. Major surface antigen of procyclic forms. This chain is Procyclic form-specific polypeptide B-alpha (PARPB), found in Trypanosoma brucei brucei.